Consider the following 401-residue polypeptide: NADH-quinone oxidoreductase subunit D (401 aa).

The protein belongs to the complex I 49 kDa subunit family. In terms of assembly, NDH-1 is composed of 15 different subunits. Subunits NuoB, C, D, E, F, and G constitute the peripheral sector of the complex.

The protein resides in the cell membrane. The catalysed reaction is a quinone + NADH + 5 H(+)(in) = a quinol + NAD(+) + 4 H(+)(out). NDH-1 shuttles electrons from NADH, via FMN and iron-sulfur (Fe-S) centers, to quinones in the respiratory chain. The immediate electron acceptor for the enzyme in this species is believed to be a menaquinone. Couples the redox reaction to proton translocation (for every two electrons transferred, four hydrogen ions are translocated across the cytoplasmic membrane), and thus conserves the redox energy in a proton gradient. The polypeptide is NADH-quinone oxidoreductase subunit D (Deinococcus radiodurans (strain ATCC 13939 / DSM 20539 / JCM 16871 / CCUG 27074 / LMG 4051 / NBRC 15346 / NCIMB 9279 / VKM B-1422 / R1)).